The sequence spans 178 residues: Large ribosomal subunit protein uL6 (178 aa).

It belongs to the universal ribosomal protein uL6 family. In terms of assembly, part of the 50S ribosomal subunit.

In terms of biological role, this protein binds to the 23S rRNA, and is important in its secondary structure. It is located near the subunit interface in the base of the L7/L12 stalk, and near the tRNA binding site of the peptidyltransferase center. This Francisella tularensis subsp. tularensis (strain WY96-3418) protein is Large ribosomal subunit protein uL6.